A 78-amino-acid chain; its full sequence is Beta-defensin 12 (78 aa).

A signal peptide spans 1 to 27 (MALSRGTFYFGLALFFIVVELPSGSWA). 3 disulfide bridges follow: cysteine 46/cysteine 73, cysteine 53/cysteine 67, and cysteine 57/cysteine 74.

This sequence belongs to the beta-defensin family.

It localises to the secreted. Has antibacterial activity. The sequence is that of Beta-defensin 12 (Defb12) from Rattus norvegicus (Rat).